The chain runs to 827 residues: Zinc finger protein 438 (827 aa).

3 disordered regions span residues 1–31, 117–173, and 193–232; these read MQNSLSVPPRDEGESNIPSGTIQSRKGLQNK, LKLP…LYKP, and ALTNGSDHGDLRPPVTNTHGSLNPPATPASPTPEEPAKQD. Polar residues-rich tracts occupy residues 16–31 and 150–159; these read NIPSGTIQSRKGLQNK and PAQTQMCPQM. Positions 217-226 are enriched in pro residues; the sequence is PATPASPTPE. C2H2-type zinc fingers lie at residues 506-528, 534-556, and 566-589; these read HRCHVCNHHFQFKQHLQDHMNTH, YSCRICRKSYVRPGSLSTHMKLH, and MCCEFCAKVFGHIRVYFGHLKEVH. A disordered region spans residues 682-723; the sequence is FPGSKGTQEELVQHASHDWKRHPERGKPEKVHSSSEESHACP. 2 stretches are compositionally biased toward basic and acidic residues: residues 688-699 and 706-721; these read TQEELVQHASHD and RGKPEKVHSSSEESHA. Residues 775–798 form a C2H2-type 4 zinc finger; that stretch reads FNCLLCAEMLGQKEDLLHHWKHQH.

The protein resides in the nucleus. Acts as a transcriptional repressor. The sequence is that of Zinc finger protein 438 (ZNF438) from Pongo abelii (Sumatran orangutan).